The following is a 623-amino-acid chain: Leucine-rich repeat, immunoglobulin-like domain and transmembrane domain-containing protein 1 (623 aa).

Residues 1 to 21 (MWVALGMLWLLALGGPHQAWS) form the signal peptide. An LRRNT domain is found at 22-59 (FCPSQCSCSLHILSDGSKARTVVCSDPDLTLPPASIPP). Residues 22–526 (FCPSQCSCSL…EVVDAEGTQR (505 aa)) are Lumenal-facing. LRR repeat units lie at residues 60-81 (DTCK…TFRP), 84-105 (RLEQ…MLRG), 108-128 (RLRE…AALK), 132-153 (QLQL…AVHF), and 156-177 (NLTF…LLDT). Residue N156 is glycosylated (N-linked (GlcNAc...) asparagine). The region spanning 201 to 253 (NPWVCDCRLYDLVHLLDGWASNLIFIEARLRCGSPRSLAGVAFSQLELRKCQS) is the LRRCT domain. The 67-residue stretch at 266–332 (PLGSTVLLRC…SGDYICQAKN (67 aa)) folds into the Ig-like C2-type domain. A disulfide bond links C275 and C328. Residues N296 and N455 are each glycosylated (N-linked (GlcNAc...) asparagine). Residues 430–518 (MVRSLKVVGD…QCVIFSTDEV (89 aa)) form the Fibronectin type-III domain. An LRR 6 repeat occupies 525 to 548 (QRLINMVVISVAAIIALPPTLLVC). Residues 527–547 (LINMVVISVAAIIALPPTLLV) form a helical membrane-spanning segment. The Cytoplasmic portion of the chain corresponds to 548–623 (CCGALRRRCH…GGRRINEYFC (76 aa)).

As to quaternary structure, homodimer. Interacts with LRIT2; may form a heterodimer with LRIT2. Interacts (via its N-terminal extracellular domain) with metabotropic glutamate receptor GRM6. Interacts (via its extreme C-terminus) with the scaffold protein FRMPD2 (via the third PDZ domain); the interaction leads to their colocalization in photoreceptor synapses. In terms of tissue distribution, retina, outer segments of photoreceptor cells.

Its subcellular location is the endoplasmic reticulum membrane. The protein localises to the cell projection. It localises to the dendrite. Its function is as follows. Photoreceptor synaptic protein essential for normal vision. Involved in synapse formation in cone photoreceptor cells. The chain is Leucine-rich repeat, immunoglobulin-like domain and transmembrane domain-containing protein 1 (Lrit1) from Rattus norvegicus (Rat).